The following is a 126-amino-acid chain: UPF0738 protein BH2850 (126 aa).

The protein belongs to the UPF0738 family.

The polypeptide is UPF0738 protein BH2850 (Halalkalibacterium halodurans (strain ATCC BAA-125 / DSM 18197 / FERM 7344 / JCM 9153 / C-125) (Bacillus halodurans)).